The sequence spans 400 residues: Formate-dependent phosphoribosylglycinamide formyltransferase (400 aa).

Residues 22–23 (EL) and glutamate 82 each bind N(1)-(5-phospho-beta-D-ribosyl)glycinamide. ATP is bound by residues arginine 115, lysine 157, 162-167 (SSGKGQ), 197-200 (EGFI), and glutamate 205. Residues 120-315 (RLAAETLGLP…EFELHARAIL (196 aa)) form the ATP-grasp domain. The Mg(2+) site is built by glutamate 274 and glutamate 286. N(1)-(5-phospho-beta-D-ribosyl)glycinamide-binding positions include aspartate 293, lysine 362, and 369-370 (RR).

It belongs to the PurK/PurT family. As to quaternary structure, homodimer.

The enzyme catalyses N(1)-(5-phospho-beta-D-ribosyl)glycinamide + formate + ATP = N(2)-formyl-N(1)-(5-phospho-beta-D-ribosyl)glycinamide + ADP + phosphate + H(+). The protein operates within purine metabolism; IMP biosynthesis via de novo pathway; N(2)-formyl-N(1)-(5-phospho-D-ribosyl)glycinamide from N(1)-(5-phospho-D-ribosyl)glycinamide (formate route): step 1/1. In terms of biological role, involved in the de novo purine biosynthesis. Catalyzes the transfer of formate to 5-phospho-ribosyl-glycinamide (GAR), producing 5-phospho-ribosyl-N-formylglycinamide (FGAR). Formate is provided by PurU via hydrolysis of 10-formyl-tetrahydrofolate. The sequence is that of Formate-dependent phosphoribosylglycinamide formyltransferase from Cupriavidus metallidurans (strain ATCC 43123 / DSM 2839 / NBRC 102507 / CH34) (Ralstonia metallidurans).